Consider the following 162-residue polypeptide: G/U mismatch-specific DNA glycosylase (162 aa).

It belongs to the uracil-DNA glycosylase (UDG) superfamily. TDG/mug family. As to quaternary structure, binds DNA as a monomer.

The protein resides in the cytoplasm. It carries out the reaction Specifically hydrolyzes mismatched double-stranded DNA and polynucleotides, releasing free uracil.. In terms of biological role, excises ethenocytosine and uracil, which can arise by alkylation or deamination of cytosine, respectively, from the corresponding mispairs with guanine in ds-DNA. It is capable of hydrolyzing the carbon-nitrogen bond between the sugar-phosphate backbone of the DNA and the mispaired base. The complementary strand guanine functions in substrate recognition. Required for DNA damage lesion repair in stationary-phase cells. This chain is G/U mismatch-specific DNA glycosylase, found in Serratia marcescens.